A 181-amino-acid polypeptide reads, in one-letter code: MICGIDEVGRGCIFGPVLSAAVIFKGNPNFLNELDDSKKLKKAKREYLSSLILENSYYAFAEVSNETIDKINIHHASLLAMQIAYEKLDINCDLVLVDGKFIPKIKAKKIQAIIKGDSIINEIKAASIIAKVQRDKLMDEYNKIYPLYALNKNKGYPTKEHKEAIKKHGISNLHRRSFKFI.

Positions 1–181 constitute an RNase H type-2 domain; sequence MICGIDEVGR…NLHRRSFKFI (181 aa). A divalent metal cation-binding residues include D6, E7, and D98.

The protein belongs to the RNase HII family. Mn(2+) is required as a cofactor. Mg(2+) serves as cofactor.

The protein localises to the cytoplasm. The catalysed reaction is Endonucleolytic cleavage to 5'-phosphomonoester.. In terms of biological role, endonuclease that specifically degrades the RNA of RNA-DNA hybrids. In Borrelia hermsii (strain HS1 / DAH), this protein is Ribonuclease HII.